Here is a 263-residue protein sequence, read N- to C-terminus: Small ribosomal subunit protein eS4 (263 aa).

The S4 RNA-binding domain occupies 42-104 (LPLIIFLRNK…TGENFRLIYD (63 aa)). Lysine 230 is covalently cross-linked (Glycyl lysine isopeptide (Lys-Gly) (interchain with G-Cter in SUMO2)). N6-acetyllysine is present on lysine 233.

Belongs to the eukaryotic ribosomal protein eS4 family. As to quaternary structure, component of the small ribosomal subunit. Part of the small subunit (SSU) processome, composed of more than 70 proteins and the RNA chaperone small nucleolar RNA (snoRNA) U3. Identified in a IGF2BP1-dependent mRNP granule complex containing untranslated mRNAs.

It is found in the cytoplasm. The protein resides in the nucleus. Its subcellular location is the nucleolus. Its function is as follows. Component of the small ribosomal subunit. The ribosome is a large ribonucleoprotein complex responsible for the synthesis of proteins in the cell. Part of the small subunit (SSU) processome, first precursor of the small eukaryotic ribosomal subunit. During the assembly of the SSU processome in the nucleolus, many ribosome biogenesis factors, an RNA chaperone and ribosomal proteins associate with the nascent pre-rRNA and work in concert to generate RNA folding, modifications, rearrangements and cleavage as well as targeted degradation of pre-ribosomal RNA by the RNA exosome. In Oryctolagus cuniculus (Rabbit), this protein is Small ribosomal subunit protein eS4 (RPS4X).